A 258-amino-acid chain; its full sequence is 6-phosphogluconolactonase (258 aa).

A2 carries the N-acetylalanine modification. Phosphoserine is present on S49. Position 180 is an N6-acetyllysine (K180).

The protein belongs to the glucosamine/galactosamine-6-phosphate isomerase family. 6-phosphogluconolactonase subfamily.

The protein resides in the cytoplasm. The catalysed reaction is 6-phospho-D-glucono-1,5-lactone + H2O = 6-phospho-D-gluconate + H(+). It participates in carbohydrate degradation; pentose phosphate pathway; D-ribulose 5-phosphate from D-glucose 6-phosphate (oxidative stage): step 2/3. In terms of biological role, hydrolysis of 6-phosphogluconolactone to 6-phosphogluconate. The sequence is that of 6-phosphogluconolactonase from Homo sapiens (Human).